A 171-amino-acid chain; its full sequence is Protein-export protein SecB (171 aa).

Belongs to the SecB family. In terms of assembly, homotetramer, a dimer of dimers. One homotetramer interacts with 1 SecA dimer.

The protein localises to the cytoplasm. One of the proteins required for the normal export of preproteins out of the cell cytoplasm. It is a molecular chaperone that binds to a subset of precursor proteins, maintaining them in a translocation-competent state. It also specifically binds to its receptor SecA. The polypeptide is Protein-export protein SecB (Xanthomonas oryzae pv. oryzae (strain MAFF 311018)).